The sequence spans 457 residues: Peptidyl-prolyl cis-trans isomerase FKBP5 (457 aa).

M1 carries the post-translational modification N-acetylmethionine. Over residues 1 to 11 (MTTDEGAKNNE) the composition is skewed to basic and acidic residues. Residues 1–24 (MTTDEGAKNNEESPTATVAEQGED) are disordered. At S13 the chain carries Phosphoserine. K28 is subject to N6-acetyllysine. One can recognise a PPIase FKBP-type 1 domain in the interval 42 to 130 (NGEETPMIGD…KIPSNATLFF (89 aa)). K155 is modified (N6-acetyllysine). Positions 157–243 (EGYSNPNEGA…GIEPNAELIY (87 aa)) constitute a PPIase FKBP-type 2 domain. TPR repeat units follow at residues 268 to 301 (AAIVKEKGTVYFKGGKYMQAVIQYGKIVSWLEME), 317 to 350 (LAAFLNLAMCYLKLREYTKAVECCDKALGLDSAN), and 351 to 384 (EKGLYRRGEAQLLMNEFESAKGDFEKVLEVNPQN). Residues 420–457 (DAKEEANKAMGKKTSEGVTNEKGTDSQAMEEEKPEGHV) are disordered. S445 bears the Phosphoserine mark.

In terms of assembly, part of a heteromultimeric cytoplasmic complex with HSP90AA1, HSPA1A/HSPA1B and steroid receptors. Upon ligand binding dissociates from the complex and FKBP4 takes its place. Interacts with functionally mature heterooligomeric progesterone receptor complexes along with HSP90 and TEBP. Interacts with NR3C1. Interacts with Akt/AKT1 and PHLPP1; enhancing dephosphorylation and subsequent activation of Akt/AKT1. Interacts with IFI44L; this interaction modulates the kinase activity of IKBKB and IKBKE. Interacts with IKBKB and IKBKE. Acetylation impairs ability to promote interaction between Akt/AKT1 and PHLPP1. Deacetylation by SIRT7 promotes interaction between Akt/AKT1 and PHLPP1, leading to suppress Akt/AKT1 activation. In terms of processing, ubiquitinated, leading to degradation in a proteasome-dependent manner. Deubiquitinated by USP49, leading to stabilization. Widely expressed, enriched in testis compared to other tissues.

It is found in the cytoplasm. The protein localises to the nucleus. It catalyses the reaction [protein]-peptidylproline (omega=180) = [protein]-peptidylproline (omega=0). Inhibited by both FK506 and rapamycin. Immunophilin protein with PPIase and co-chaperone activities. Component of unligated steroid receptors heterocomplexes through interaction with heat-shock protein 90 (HSP90). Plays a role in the intracellular trafficking of heterooligomeric forms of steroid hormone receptors maintaining the complex into the cytoplasm when unliganded. Acts as a regulator of Akt/AKT1 activity by promoting the interaction between Akt/AKT1 and PHLPP1, thereby enhancing dephosphorylation and subsequent activation of Akt/AKT1. Interacts with IKBKE and IKBKB which facilitates IKK complex assembly leading to increased IKBKE and IKBKB kinase activity, NF-kappa-B activation, and IFN production. This Homo sapiens (Human) protein is Peptidyl-prolyl cis-trans isomerase FKBP5 (FKBP5).